Consider the following 647-residue polypeptide: DNA mismatch repair protein MutL (647 aa).

Residues lysine 375–glycine 433 are disordered. The segment covering glutamine 387–glutamine 400 has biased composition (low complexity).

This sequence belongs to the DNA mismatch repair MutL/HexB family.

In terms of biological role, this protein is involved in the repair of mismatches in DNA. It is required for dam-dependent methyl-directed DNA mismatch repair. May act as a 'molecular matchmaker', a protein that promotes the formation of a stable complex between two or more DNA-binding proteins in an ATP-dependent manner without itself being part of a final effector complex. The sequence is that of DNA mismatch repair protein MutL from Bacillus cereus (strain AH820).